Here is a 382-residue protein sequence, read N- to C-terminus: Neuropeptide Y receptor type 1 (382 aa).

Topologically, residues 1–33 are extracellular; the sequence is MNSTSFSQVENHSIFCNFSENSQFLAFESDDCH. 3 N-linked (GlcNAc...) asparagine glycosylation sites follow: Asn2, Asn11, and Asn17. Residues 34–54 traverse the membrane as a helical segment; it reads LPLAMIFTLALAYGAVIILGV. The Cytoplasmic portion of the chain corresponds to 55-75; that stretch reads TGNLALIMIILKQKEMRNVTN. Residues 76 to 96 form a helical membrane-spanning segment; it reads ILIVNLSFSDLLVAIMCLPFT. Topologically, residues 97 to 115 are extracellular; the sequence is FVYTLMDHWVFGEAMCKLN. Cys112 and Cys197 are oxidised to a cystine. A helical transmembrane segment spans residues 116-136; that stretch reads PFVQCVSITVSIFSLVLIAVE. Residues 137-153 are Cytoplasmic-facing; it reads RHQLIINPRGWRPNNRH. Residues 154-174 traverse the membrane as a helical segment; it reads AYVGIAVIWVLAVVSSLPFLI. The Extracellular portion of the chain corresponds to 175-210; the sequence is YQVLTDEPFQNVTLDAFKDKYVCFDKFPSDSHRLSY. Residue Asn185 is glycosylated (N-linked (GlcNAc...) asparagine). Residues 211 to 231 traverse the membrane as a helical segment; the sequence is TTLLLMLQYFGPLCFIFICYF. The Cytoplasmic portion of the chain corresponds to 232 to 259; it reads KIYIRLKRRNNMMDKMRDNKYRSSETKR. Residues 260 to 280 form a helical membrane-spanning segment; sequence INIMLLSIVVAFAVCWLPLTI. The Extracellular portion of the chain corresponds to 281–298; it reads FNTVFDWNHQIIATCNHN. The chain crosses the membrane as a helical span at residues 299–319; the sequence is LLFLLCHLTAMISTCVNPIFY. The Cytoplasmic segment spans residues 320–382; that stretch reads GFLNKNFQRD…KINNDDNEKI (63 aa). Residue Cys337 is the site of S-palmitoyl cysteine attachment. Phosphoserine is present on Ser367.

It belongs to the G-protein coupled receptor 1 family.

The protein resides in the cell membrane. Its function is as follows. Receptor for neuropeptide Y and peptide YY. The sequence is that of Neuropeptide Y receptor type 1 (NPY1R) from Canis lupus familiaris (Dog).